Reading from the N-terminus, the 253-residue chain is Small ribosomal subunit protein uS3 (253 aa).

One can recognise a KH type-2 domain in the interval 39 to 109 (IRNYVLARLK…EVKIDVVEVI (71 aa)). Residues 220–253 (DEMKKMKDRRNDGGAKGRDSRDNRSKRRSRSKRS) are disordered. Residues 221–242 (EMKKMKDRRNDGGAKGRDSRDN) show a composition bias toward basic and acidic residues. Positions 243-253 (RSKRRSRSKRS) are enriched in basic residues.

The protein belongs to the universal ribosomal protein uS3 family. As to quaternary structure, part of the 30S ribosomal subunit. Forms a tight complex with proteins S10 and S14.

In terms of biological role, binds the lower part of the 30S subunit head. Binds mRNA in the 70S ribosome, positioning it for translation. This is Small ribosomal subunit protein uS3 from Chlorobium chlorochromatii (strain CaD3).